We begin with the raw amino-acid sequence, 113 residues long: UPF0482 protein YnfB (113 aa).

An N-terminal signal peptide occupies residues 1–28; the sequence is MKITLSKRIDLLAFLLPCALALSTTVHA.

This sequence belongs to the UPF0482 family.

The polypeptide is UPF0482 protein YnfB (Escherichia coli O157:H7).